Consider the following 179-residue polypeptide: Large ribosomal subunit protein uL6c (179 aa).

This sequence belongs to the universal ribosomal protein uL6 family. In terms of assembly, part of the 50S ribosomal subunit.

The protein resides in the plastid. The protein localises to the cyanelle. Binds 23S rRNA. The polypeptide is Large ribosomal subunit protein uL6c (rpl6) (Cyanophora paradoxa).